The sequence spans 338 residues: MAQLGAVVAVAASFFCASLFSAVHKIEEGHIGVYYRGGALLTSTSGPGFHLMLPFITSYKSVQTTLQTDEVKNVPCGTSGGVMIYFDRIEVVNFLVPHAVYDIVKNYTADYDKALIFNKIHHELNQFCSVHTLQEVYIELFDQIDENLKLALQQDLTSMAPGLVIQAVRVTKPNIPEAIRRNYELMESEKTKLLIAAQKQKVVEKEAETERKKALIEAEKVAQVAEITFGQKVMEKETEKRISEIEDAAFLAREKAKADAECYTAMKIAEANKLKLTPEYLQLMKYKAIASNSKIYFGKDIPNMFMDSAGGVGKQFEGLADKLSFVLEDEPMEADSEN.

Over 1 to 3 (MAQ) the chain is Cytoplasmic. The chain crosses the membrane as a helical span at residues 4-24 (LGAVVAVAASFFCASLFSAVH). Topologically, residues 25–338 (KIEEGHIGVY…DEPMEADSEN (314 aa)) are lumenal. Asn106 is a glycosylation site (N-linked (GlcNAc...) asparagine). An interaction with ERLIN1 region spans residues 177–309 (EAIRRNYELM…DIPNMFMDSA (133 aa)). The residue at position 267 (Lys267) is an N6-acetyllysine.

The protein belongs to the band 7/mec-2 family. In terms of assembly, forms a heteromeric complex with ERLIN1. In complex with ERLIN1, interacts with RNF170. Interacts with activated ITPR1, independently of the degree of ITPR1 polyubiquitination. Interacts with SCAP, INSIG1, SREBF1 and SREBF2 under cholesterol sufficiency conditions; indicative for an association with the SCAP-SREBP-INSIG complex. Probably part of an AMFR/gp78 and INSIG1-containing ubiquitin ligase complex involved in ERAD of HMGCR. Interacts with TMUB1; TMUB1 bridges the association with AMFR. Interacts with SYVN1 and RNF139. Interacts with TMEM259. Interacts with TMEM41B. Deubiquitinated by USP25; leading to stabilization.

The protein resides in the endoplasmic reticulum membrane. In terms of biological role, component of the ERLIN1/ERLIN2 complex which mediates the endoplasmic reticulum-associated degradation (ERAD) of inositol 1,4,5-trisphosphate receptors (IP3Rs) such as ITPR1. Promotes sterol-accelerated ERAD of HMGCR probably implicating an AMFR/gp78-containing ubiquitin ligase complex. Involved in regulation of cellular cholesterol homeostasis by regulation the SREBP signaling pathway. May promote ER retention of the SCAP-SREBF complex. The chain is Erlin-2 (ERLIN2) from Bos taurus (Bovine).